The sequence spans 473 residues: Glutamate--tRNA ligase 1 (473 aa).

A 'HIGH' region motif is present at residues 11–21 (PSPTGYLHIGG). Basic and acidic residues predominate over residues 113-133 (KARAEGRPPRYDGRWRDRDPS). A disordered region spans residues 113 to 136 (KARAEGRPPRYDGRWRDRDPSEAP). Residues 240-244 (KLSKR) carry the 'KMSKS' region motif. Lysine 243 serves as a coordination point for ATP.

This sequence belongs to the class-I aminoacyl-tRNA synthetase family. Glutamate--tRNA ligase type 1 subfamily. Monomer.

It localises to the cytoplasm. It catalyses the reaction tRNA(Glu) + L-glutamate + ATP = L-glutamyl-tRNA(Glu) + AMP + diphosphate. In terms of biological role, catalyzes the attachment of glutamate to tRNA(Glu) in a two-step reaction: glutamate is first activated by ATP to form Glu-AMP and then transferred to the acceptor end of tRNA(Glu). The protein is Glutamate--tRNA ligase 1 of Brucella melitensis biotype 1 (strain ATCC 23456 / CCUG 17765 / NCTC 10094 / 16M).